Consider the following 711-residue polypeptide: Zinc finger protein 175 (711 aa).

The span at 1 to 11 (MPADVNLSQKP) shows a compositional bias: polar residues. The tract at residues 1–21 (MPADVNLSQKPQVLGPEKQDG) is disordered. The KRAB domain occupies 27–98 (VSFEDVTVDF…EAEVSHQRCQ (72 aa)). The C2H2-type 1; atypical zinc finger occupies 279 to 301 (DGCSECGGSFTQKSHLFAQQRIH). The segment at 307-329 (HECGKCGKAFMPQLKLSVYLTDH) adopts a C2H2-type 2; atypical zinc-finger fold. The segment at 335-357 (CICKECGKVFIQRSELLTHQKTH) adopts a C2H2-type 3 zinc-finger fold. The Nuclear localization signal motif lies at 359-362 (RKKP). 12 C2H2-type zinc fingers span residues 363–385 (YKCHDCGKAFFQMLSLFRHQRTH), 391–413 (YECSECGKGFSQNSTLIIHQKIH), 419–441 (YACSECGKAFTQKSTLSLHQRIH), 447–469 (YVCIECGQAFIQKAHLIVHQRSH), 475–497 (YQCHNCGKSFISKSQLDIHHRIH), 503–525 (YECSDCGKTFTQKSHLNIHQKIH), 531–553 (HVCSECGKAFNQKSILSMHQRIH), 559–581 (YKCSECGKAFTSKSQFKEHQRIH), 587–609 (YVCTECGKAFNGRSNFHKHQITH), 615–637 (FVCYKCGKAFVQKSELITHQRTH), 643–665 (YECLDCGKSFSKKPQLKVHQRIH), and 671–693 (YVCSECGKAFNNRSNFNKHQTTH).

The protein belongs to the krueppel C2H2-type zinc-finger protein family. Ubiquitous.

The protein resides in the cytoplasm. It is found in the nucleus. Functionally, down-regulates the expression of several chemokine receptors. Interferes with HIV-1 replication by suppressing Tat-induced viral LTR promoter activity. The protein is Zinc finger protein 175 (ZNF175) of Homo sapiens (Human).